We begin with the raw amino-acid sequence, 284 residues long: uncharacterized protein (284 aa).

An N-terminal signal peptide occupies residues 1-23 (MKRGCAIAVMICGLITSVSAASA).

This sequence belongs to the surface antigen msp4 family.

This is an uncharacterized protein from Brucella melitensis biotype 1 (strain ATCC 23456 / CCUG 17765 / NCTC 10094 / 16M).